Reading from the N-terminus, the 991-residue chain is Ribonuclease TUDOR 1 (991 aa).

Ala2 carries the post-translational modification N-acetylalanine. TNase-like domains are found at residues Gln8–Lys151, Lys186–Asn364, Gln378–Ala557, and Arg587–Asn714. The disordered stretch occupies residues Arg227–Arg250. Residues Asn782–Ala847 enclose the Tudor domain. Position 970 is a phosphotyrosine (Tyr970). The segment at Gly971–Arg991 is disordered. Ser975 carries the post-translational modification Phosphoserine. Thr980 carries the post-translational modification Phosphothreonine.

Expressed in seeds, leaves, flowers, roots and siliques (at protein level). Accumulates in the cap and elongation zone of the root apices (at protein level).

Its subcellular location is the cytoplasm. The protein localises to the cytoplasmic granule. It localises to the perinuclear region. It is found in the endoplasmic reticulum. Repressed by the specific inhibitor 3',5'-deoxythymidine bisphosphate (pdTp); this RNase activity inhibition impairs subcellular relocation upon abiotic stress and leads to reduced stress resistance. Its function is as follows. Cytoprotective ribonuclease (RNase) required for resistance to abiotic stresses, acting as a positive regulator of mRNA decapping during stress. Essential for the integrity and function of cytoplasmic messenger ribonucleoprotein (mRNP) complexes called stress granules (SGs) and processing bodies (PBs), sites of post-transcriptional gene regulation during stress (e.g. salt and heat). Involved in gibberellic acid (GA) biosynthesis. Essential for stress tolerance, probably by regulating mRNAs entering the secretory pathway. Component of stress granules (SGs) that regulates growth under salt stress by modulating levels of GA20OX3 mRNA. Binds GA20OX3 mRNA. May inhibit the degradation of mRNAs involved in stress adaptation. The protein is Ribonuclease TUDOR 1 of Arabidopsis thaliana (Mouse-ear cress).